Reading from the N-terminus, the 252-residue chain is Neurovirulence factor ICP34.5 (252 aa).

Residues 1–15 (MARRRRRHRGPRRPR) show a composition bias toward basic residues. The required for nucleolar localization stretch occupies residues 1–17 (MARRRRRHRGPRRPRPP). Disordered regions lie at residues 1-129 (MARR…PFRL) and 150-179 (RRAG…PATP). The span at 25-36 (TAQSQVTSTPNS) shows a compositional bias: polar residues. A compositionally biased stretch (pro residues) spans 46–59 (AAPPPPPAGGPPPS). Residues 74–84 (ASDDDDDDDWP) show a composition bias toward acidic residues. 2 stretches are compositionally biased toward pro residues: residues 85–94 (DSPPPEPAPE) and 120–129 (SHPPSRPFRL). The short motif at 129 to 138 (LPPRLALRLR) is the Nuclear export signal element. 6 repeat units span residues 162–164 (ATP), 165–167 (ATP), 168–170 (ATP), 171–173 (ATP), 174–176 (ATP), and 177–179 (ATP). A 6 X 3 AA tandem repeats of A-T-P region spans residues 162-179 (ATPATPATPATPATPATP). Positions 165–179 (ATPATPATPATPATP) are enriched in low complexity. The tract at residues 179–192 (PARVRFSPHVRVRH) is binding to PP1CA. Positions 179-192 (PARVRFSPHVRVRH) are interaction with host PPP1CA. Positions 194 to 252 (VVWASAARLARRGSWARERADRARFRRRVAEAEAVIGPCLGPKARARALARGAGPANSV) are important for interferon resistance. The Bipartite nuclear localization signal signature appears at 204–222 (RRGSWARERADRARFRRRV). Positions 222 to 237 (VAEAEAVIGPCLGPKA) are interaction with host EIF2S1/EIF-2ALPHA.

Belongs to the PPP1R15 family. As to quaternary structure, interacts with host PPP1CA to form a high-molecular-weight complex that dephosphorylates EIF2S1/eIF-2alpha. Interacts with host EIF2S1/eIF-2alpha; this interaction is crucial for the specific dephosphorylation of EIF2S1/eIF-2alpha by PPP1CA. Binds to proliferating cell nuclear antigen (PCNA), which may release host cells from growth arrest and facilitate viral replication. Interacts (via N-terminus) with host C1QBP and PRKCA. Interacts with protein UL31. Interacts with host TBK1. Interacts with host STING/TMEM173; this interaction inhibits the intracellular DNA sensing pathway. Interacts with host BECN1; this interaction modulates host autophagy.

It localises to the host cytoplasm. It is found in the host nucleus. The protein resides in the host nucleolus. The protein localises to the virion. In terms of biological role, inhibits the establishment of the immune response and of the integrated stress response (ISR) in the infected cell. Plays essential roles in viral nuclear egress to mediate capsid transit across the nuclear membrane. Facilitates nuclear egress cooperatively with host C1QBP and protein kinase C/PKC to induce lamin A/C phosphorylation and subsequent reorganization. In turn, lamina disassembles and nuclear egress occurs. Recruits the serine/threonine protein phosphatase PPP1CA/PP1-alpha to dephosphorylate the translation initiation factor EIF2S1/eIF-2alpha, thereby couteracting the host shutoff of protein synthesis involving double-stranded RNA-dependent protein kinase EIF2AK2/PKR. In turn, controls host IRF3 activation and subsequently inhibits host interferon response. Controls the DNA sensing pathway by interacting with and inhibiting host STING/TMEM173. Also down-modulates the host MHC class II proteins cell surface expression. Acts as a neurovirulence factor that has a profound effect on the growth of the virus in central nervous system tissue, by interacting with host BECN1 and thereby antagonizing the host autophagy response. The protein is Neurovirulence factor ICP34.5 (RL1) of Human herpesvirus 1 (strain CVG-2) (HHV-1).